The chain runs to 322 residues: Quinolinate synthase (322 aa).

The iminosuccinate site is built by histidine 37 and serine 54. Residue cysteine 99 participates in [4Fe-4S] cluster binding. Iminosuccinate contacts are provided by residues 125–127 (YIN) and serine 142. Cysteine 185 serves as a coordination point for [4Fe-4S] cluster. Iminosuccinate-binding positions include 211 to 213 (HPE) and threonine 228. A [4Fe-4S] cluster-binding site is contributed by cysteine 278.

The protein belongs to the quinolinate synthase family. Type 2 subfamily. It depends on [4Fe-4S] cluster as a cofactor.

It localises to the cytoplasm. It catalyses the reaction iminosuccinate + dihydroxyacetone phosphate = quinolinate + phosphate + 2 H2O + H(+). Its pathway is cofactor biosynthesis; NAD(+) biosynthesis; quinolinate from iminoaspartate: step 1/1. In terms of biological role, catalyzes the condensation of iminoaspartate with dihydroxyacetone phosphate to form quinolinate. This is Quinolinate synthase from Chlorobaculum parvum (strain DSM 263 / NCIMB 8327) (Chlorobium vibrioforme subsp. thiosulfatophilum).